Reading from the N-terminus, the 169-residue chain is UPF0303 protein BMEI0598 (169 aa).

This sequence belongs to the UPF0303 family.

The chain is UPF0303 protein BMEI0598 from Brucella melitensis biotype 1 (strain ATCC 23456 / CCUG 17765 / NCTC 10094 / 16M).